Reading from the N-terminus, the 244-residue chain is rRNA adenine N-6-methyltransferase (244 aa).

The S-adenosyl-L-methionine site is built by N11, I13, G38, E59, D84, and S101.

It belongs to the class I-like SAM-binding methyltransferase superfamily. rRNA adenine N(6)-methyltransferase family.

Involved in erythromycin resistance. The sequence is that of rRNA adenine N-6-methyltransferase (ermG) from Lysinibacillus sphaericus (Bacillus sphaericus).